Reading from the N-terminus, the 279-residue chain is Tryptophan synthase alpha chain (279 aa).

Active-site proton acceptor residues include E50 and D61.

Belongs to the TrpA family. Tetramer of two alpha and two beta chains.

It catalyses the reaction (1S,2R)-1-C-(indol-3-yl)glycerol 3-phosphate + L-serine = D-glyceraldehyde 3-phosphate + L-tryptophan + H2O. Its pathway is amino-acid biosynthesis; L-tryptophan biosynthesis; L-tryptophan from chorismate: step 5/5. In terms of biological role, the alpha subunit is responsible for the aldol cleavage of indoleglycerol phosphate to indole and glyceraldehyde 3-phosphate. This Rhizobium rhizogenes (strain K84 / ATCC BAA-868) (Agrobacterium radiobacter) protein is Tryptophan synthase alpha chain.